The chain runs to 152 residues: MKRDKRLEIIKEIVTNNKILTQEELQSLLLERGVEVTQATLSRDIRKLNIIKKRDKGESFYSFLTSGNSKINSDLQLYFYNFVISAKSVGALVVIRTKLGEADVLANALDDERDSRTDILGTIAGADTLLVICASEKAANILTAEIKYILLG.

The protein belongs to the ArgR family.

It is found in the cytoplasm. The protein operates within amino-acid biosynthesis; L-arginine biosynthesis [regulation]. Functionally, regulates arginine biosynthesis genes. The sequence is that of Arginine repressor from Lactococcus lactis subsp. cremoris (strain MG1363).